Here is a 555-residue protein sequence, read N- to C-terminus: Glucose-6-phosphate isomerase (555 aa).

D-glucose 6-phosphate contacts are provided by residues 169-170 (GS), 219-224 (SKTFTT), Q364, E368, H399, and K521. The active-site Proton donor is E368. Catalysis depends on residues H399 and K521.

Belongs to the GPI family. Homodimer.

It is found in the cytoplasm. The protein localises to the cytosol. The catalysed reaction is alpha-D-glucose 6-phosphate = beta-D-fructose 6-phosphate. The protein operates within carbohydrate degradation; glycolysis; D-glyceraldehyde 3-phosphate and glycerone phosphate from D-glucose: step 2/4. In terms of biological role, in the cytoplasm, catalyzes the conversion of glucose-6-phosphate to fructose-6-phosphate, the second step in glycolysis, and the reverse reaction during gluconeogenesis. The chain is Glucose-6-phosphate isomerase (PGI1) from Eremothecium gossypii (strain ATCC 10895 / CBS 109.51 / FGSC 9923 / NRRL Y-1056) (Yeast).